Here is a 121-residue protein sequence, read N- to C-terminus: NADH-quinone oxidoreductase subunit 7 (121 aa).

The next 3 membrane-spanning stretches (helical) occupy residues 11–31 (ILVFLGMASALAIVLILAAAV), 65–85 (LVSILFIIFDLEVAFLFPWAV), and 93–113 (VAFWGLMVFLAVLTVGFAYEW).

It belongs to the complex I subunit 3 family. As to quaternary structure, NDH-1 is composed of at least 14 different subunits, Nqo1 to Nqo14. The complex has a L-shaped structure, with the hydrophobic arm (subunits Nqo7, Nqo8, Nqo10 to Nqo14) embedded in the inner membrane and the hydrophilic peripheral arm (subunits Nqo1 to Nqo6, Nqo9) protruding into the bacterial cytoplasm. The hydrophilic domain contains all the redox centers.

It localises to the cell inner membrane. It carries out the reaction a quinone + NADH + 5 H(+)(in) = a quinol + NAD(+) + 4 H(+)(out). Functionally, NDH-1 shuttles electrons from NADH, via FMN and iron-sulfur (Fe-S) centers, to quinones in the respiratory chain. The immediate electron acceptor for the enzyme in this species is believed to be ubiquinone. Couples the redox reaction to proton translocation (for every two electrons transferred, four hydrogen ions are translocated across the cytoplasmic membrane), and thus conserves the redox energy in a proton gradient. This chain is NADH-quinone oxidoreductase subunit 7 (nqo7), found in Paracoccus denitrificans.